A 504-amino-acid polypeptide reads, in one-letter code: Plasma protease C1 inhibitor (504 aa).

The signal sequence occupies residues 1–22; the sequence is MASRLTPLTLLLLLLAGDRAFS. The disordered stretch occupies residues 22-67; that stretch reads SDPEATSHSTQDPLEAQAKSRESFPERDDSWSPPEPTVLPSTWPTT. Basic and acidic residues predominate over residues 39–51; it reads AKSRESFPERDDS. N-linked (GlcNAc...) asparagine glycosylation is found at Asn75, Asn83, and Asn107. Residues 85–124 show a composition bias toward polar residues; that stretch reads SFSQHSQPAAQLPTDSPGQPPLNSSSQPSTASDLPTQATT. A disordered region spans residues 85-141; the sequence is SFSQHSQPAAQLPTDSPGQPPLNSSSQPSTASDLPTQATTEPFCPEPLAQCSDSDRD. Cystine bridges form between Cys128-Cys432 and Cys135-Cys210. Asn243 and Asn356 each carry an N-linked (GlcNAc...) asparagine glycan.

Belongs to the serpin family. Interacts with MASP1.

It localises to the secreted. Its function is as follows. Serine protease inhibitor, which acrs as a regulator of the classical complement pathway. Forms a proteolytically inactive stoichiometric complex with the C1r or C1s proteases. May also regulate blood coagulation, fibrinolysis and the generation of kinins. Very efficient inhibitor of FXIIa. Inhibits chymotrypsin and kallikrein. In Mus musculus (Mouse), this protein is Plasma protease C1 inhibitor (Serping1).